Reading from the N-terminus, the 441-residue chain is MLNNSHLLIIWLFGLISGFNLMITGNTLNYWLAKEDIALQTIGILSFITLPYSINFLLAPIFDAVQIKYLNKIFGHRLSWICLTSTALIFLIYIFSFLDPRTNLVLFTFTALIISFFSAAQDTILSALRTEIVPKESLGFTSGIYIFGYRIGMLLAGSGAIYLSIYFTFNEIYKIFAGLVFIYLILLIVAARYTNSFGLVEERICHSPSFLCHSRGSGNPNNEFFIKRYYSNFLKIFLDSRFRGNDIKSGNDISLAYFIILILIFLVLYRLPDNLINVMINPFLLHLEYDAFEIASVGKFWGVVGAIIGGLVGGFIMKHKNILNSIFLFGIIHALGHILFIFLEINGKNSLLLFITIGIESITGGMTMTAYIAFISSLCQGKFRATQYSFLSSMMGISRSIFPIISGYMVVNFGWQNFFLFTTIITIPSLLILLKIKTKLQ.

A run of 12 helical transmembrane segments spans residues 5–25, 42–62, 78–98, 104–124, 143–163, 171–191, 249–269, 297–317, 325–345, 352–372, 390–410, and 413–433; these read SHLL…MITG, IGIL…APIF, LSWI…FSFL, LVLF…QDTI, GIYI…AIYL, EIYK…IVAA, SGND…LVLY, VGKF…GFIM, SIFL…FLEI, LLFI…TAYI, FLSS…GYMV, and FGWQ…LLIL.

This sequence belongs to the major facilitator superfamily.

Its subcellular location is the cell inner membrane. The polypeptide is Putative transporter AmpG 1 (ampG1) (Rickettsia felis (strain ATCC VR-1525 / URRWXCal2) (Rickettsia azadi)).